The chain runs to 109 residues: Putative transposase MJ0856.1 (109 aa).

Residues C36, C39, C62, and C65 each contribute to the Zn(2+) site.

This sequence belongs to the transposase 35 family.

The sequence is that of Putative transposase MJ0856.1 from Methanocaldococcus jannaschii (strain ATCC 43067 / DSM 2661 / JAL-1 / JCM 10045 / NBRC 100440) (Methanococcus jannaschii).